Consider the following 117-residue polypeptide: Large ribosomal subunit protein bL20 (117 aa).

It belongs to the bacterial ribosomal protein bL20 family.

Its function is as follows. Binds directly to 23S ribosomal RNA and is necessary for the in vitro assembly process of the 50S ribosomal subunit. It is not involved in the protein synthesizing functions of that subunit. The chain is Large ribosomal subunit protein bL20 from Citrifermentans bemidjiense (strain ATCC BAA-1014 / DSM 16622 / JCM 12645 / Bem) (Geobacter bemidjiensis).